The sequence spans 64 residues: Large ribosomal subunit protein bL28 (64 aa).

Residues 1-23 (MSKECYFTGRKTVSSNNRSHAMN) form a disordered region. Residues 11 to 23 (KTVSSNNRSHAMN) are compositionally biased toward polar residues.

The protein belongs to the bacterial ribosomal protein bL28 family.

The chain is Large ribosomal subunit protein bL28 from Lactococcus lactis subsp. cremoris (strain SK11).